The primary structure comprises 127 residues: Snaclec CHH-B subunit alpha (127 aa).

3 disulfides stabilise this stretch: C4-C15, C32-C120, and C95-C112. One can recognise a C-type lectin domain in the interval 11–121; sequence YDRYCYKPFK…CEQQHSFICK (111 aa).

This sequence belongs to the snaclec family. Heterodimer of subunits alpha and beta; disulfide-linked. As to expression, expressed by the venom gland.

The protein localises to the secreted. Binds to the subunit GPIbalpha (GP1BA) of the platelet GPIb/V/IX receptor system. It inhibits ristocetin- and vWF-induced platelet aggregation in platelet-rich plasma by inhibiting the binding of vWF to GPIbalpha. The protein is Snaclec CHH-B subunit alpha of Crotalus horridus (Timber rattlesnake).